Consider the following 74-residue polypeptide: Putative defensin-like protein 186 (74 aa).

The N-terminal stretch at 1–22 is a signal peptide; the sequence is MKNSSIILVLVFFFFISSSGEA. Cystine bridges form between cysteine 25-cysteine 74, cysteine 31-cysteine 51, cysteine 37-cysteine 68, and cysteine 41-cysteine 70.

This sequence belongs to the DEFL family.

It localises to the secreted. This Arabidopsis thaliana (Mouse-ear cress) protein is Putative defensin-like protein 186 (LCR40).